We begin with the raw amino-acid sequence, 304 residues long: Putative integrase/recombinase HI_1414 (304 aa).

A Core-binding (CB) domain is found at 30–109 (TLFSDVIKRY…TIGHIFKIAL (80 aa)). A Tyr recombinase domain is found at 131-304 (PRTQRVTEEN…DMAEVAELLD (174 aa)). Active-site residues include Arg174, Lys199, His256, Arg259, and His281. Tyr291 functions as the O-(3'-phospho-DNA)-tyrosine intermediate in the catalytic mechanism.

This sequence belongs to the 'phage' integrase family.

The polypeptide is Putative integrase/recombinase HI_1414 (Haemophilus influenzae (strain ATCC 51907 / DSM 11121 / KW20 / Rd)).